The sequence spans 206 residues: Small ribosomal subunit protein uS4 (206 aa).

The S4 RNA-binding domain maps to 98-163 (MRLDNIVYRL…SEKFKTFVEN (66 aa)).

The protein belongs to the universal ribosomal protein uS4 family. In terms of assembly, part of the 30S ribosomal subunit. Contacts protein S5. The interaction surface between S4 and S5 is involved in control of translational fidelity.

One of the primary rRNA binding proteins, it binds directly to 16S rRNA where it nucleates assembly of the body of the 30S subunit. Its function is as follows. With S5 and S12 plays an important role in translational accuracy. The polypeptide is Small ribosomal subunit protein uS4 (Clostridium beijerinckii (strain ATCC 51743 / NCIMB 8052) (Clostridium acetobutylicum)).